The following is a 390-amino-acid chain: Chorismate synthase (390 aa).

Arginine 48 provides a ligand contact to NADP(+). Residues 126–128 (RAS), glycine 286, 301–305 (KPTSS), and arginine 328 each bind FMN.

Belongs to the chorismate synthase family. Requires FMNH2 as cofactor.

The catalysed reaction is 5-O-(1-carboxyvinyl)-3-phosphoshikimate = chorismate + phosphate. It functions in the pathway metabolic intermediate biosynthesis; chorismate biosynthesis; chorismate from D-erythrose 4-phosphate and phosphoenolpyruvate: step 7/7. In terms of biological role, catalyzes the anti-1,4-elimination of the C-3 phosphate and the C-6 proR hydrogen from 5-enolpyruvylshikimate-3-phosphate (EPSP) to yield chorismate, which is the branch point compound that serves as the starting substrate for the three terminal pathways of aromatic amino acid biosynthesis. This reaction introduces a second double bond into the aromatic ring system. This is Chorismate synthase from Sulfurisphaera tokodaii (strain DSM 16993 / JCM 10545 / NBRC 100140 / 7) (Sulfolobus tokodaii).